The sequence spans 398 residues: Streptopain (398 aa).

The N-terminal stretch at 1-27 (MNKKKLGVRLLSLLALGGFVLANPVFA) is a signal peptide. Positions 28–145 (DQNFARNEKE…TTYAGTAEIK (118 aa)) are excised as a propeptide. Residue C192 is the Nucleophile of the active site. A Cysteine methyl disulfide; in zymogen form modification is found at C192. A protein is bound by residues S282 and G339. The Proton acceptor role is filled by H340. A C-terminal active site loop region spans residues 368 to 390 (RLDALNPSALGTGGGAGGFNGYQ).

It belongs to the peptidase C10 family. In terms of assembly, monomer. In terms of processing, the mature protease is derived from the precursor sequence by cleavage, either in cis via an autocatalytic mechanism, or in trans by mature SpeB or host proteases (trypsin, plasmin or subtilisin). Maturation can involve a number of protein cleavage intermediates. Mature SpeB probably plays the most important role in protein maturation in physiological conditions. Methylthiolation at Cys-192 of the inactive zymogen form is probably involved in the mechanism of secretion of the proteinase into the culture fluid.

The protein resides in the secreted. Its subcellular location is the host extracellular space. It localises to the host cytoplasm. The catalysed reaction is Preferential cleavage with hydrophobic residues at P2, P1 and P1'.. Its activity is regulated as follows. Synthesized as an inactive zymogen to protect the intracellular components of the bacteria from proteolytic activity during protein production. Once secreted into the extracellular milieu, cleaved into the active protease: maturation can be mediated in cis by autocatalytic cleavage, or in trans by mature SpeB or host proteases. Protease activity is strongly inhibited by zinc and copper, which prevent its maturation into an active protease: inhibition by metal ions may be required to prevent proteolysis of streptococcal proteins. Cysteine protease that acts as a key streptococcal virulence factor by cleaving host proteins involved in immune response. Triggers inflammation by mediating cleavage of host proteins, which can both promote host pathogenesis by triggering sterile inflammation and/or restrict streptococcal infection, depending on host immune statue and infection site. Cleaves host gasdermin-A (GSDMA) in epithelial cells, promoting GSDMA activation and formation of gasdermin pores, triggering pyroptosis. Pyroptosis triggers the elimination of the infected skin cell, depriving the pathogen of its protective niche, while inducing an inflammatory response. This ultimately prevents bacterial penetration of the epithelial barrier and a subsequent systemic dissemination of the pathogen. Also mediates cleavage of the cytokine precursor interleukin-1 beta (IL1B) to its mature form, resulting in inflammation and septic shock. SpeB-mediated maturation of IL1B plays a dual role depending on infection site: while IL1B inflammatory response prevents bacterial growth during invasive skin infections, it promotes streptococcal infection of the nasopharynx by disrupting colonization resistance mediated by the microbiota. Inhibits host autophagy be catalyzing cleavage and inactivation of key autophagy factors, such as CALCOCO2, NBR1 and SQSTM1. Cleaves and inhibits a number of complement factors, such as C2, C3-beta chain of C3, C4, C5 or SERPING1, thereby promoting evasion of host immunity. May also impair adaptive immunity by catalyzing cleavage and degradation of host immunoglobulins to promote immune system evasion; the relevance of this activity is however unsure in vivo. Catalyzes maturation and release of the peptide hormone bradykinin from the precursor Kininogen-1 (KNG1) to produce hypotension during septic shock. Also involved in bacterial translocation across the host epithelial barrier by mediating cleavage and degradation of host epithelial junction proteins, such as CDH1 and OCLN. Additionally, has been involved in degradation of fibronectin and vitronectin, two host extracellular matrix proteins involved in tissue integrity. Also able to catalyze cleavage and degradation of streptococcal proteins, such as C5a peptidase, EndoS or SmeZ. Degradation of streptococcal proteins is however strictly regulated to preserve integrity of other virulence factors. The protein is Streptopain of Streptococcus pyogenes serotype M1.